The following is a 130-amino-acid chain: Small ribosomal subunit protein uS11c (130 aa).

It belongs to the universal ribosomal protein uS11 family. In terms of assembly, part of the 30S ribosomal subunit.

It localises to the plastid. The protein localises to the chloroplast. The sequence is that of Small ribosomal subunit protein uS11c from Pyropia yezoensis (Susabi-nori).